Consider the following 209-residue polypeptide: dTTP/UTP pyrophosphatase (209 aa).

The active-site Proton acceptor is the Asp79.

This sequence belongs to the Maf family. YhdE subfamily. The cofactor is a divalent metal cation.

It localises to the cytoplasm. The catalysed reaction is dTTP + H2O = dTMP + diphosphate + H(+). The enzyme catalyses UTP + H2O = UMP + diphosphate + H(+). In terms of biological role, nucleoside triphosphate pyrophosphatase that hydrolyzes dTTP and UTP. May have a dual role in cell division arrest and in preventing the incorporation of modified nucleotides into cellular nucleic acids. This Bradyrhizobium diazoefficiens (strain JCM 10833 / BCRC 13528 / IAM 13628 / NBRC 14792 / USDA 110) protein is dTTP/UTP pyrophosphatase.